Here is a 132-residue protein sequence, read N- to C-terminus: L-ectoine synthase (132 aa).

It belongs to the ectoine synthase family.

The enzyme catalyses (2S)-4-acetamido-2-aminobutanoate = L-ectoine + H2O. The protein operates within amine and polyamine biosynthesis; ectoine biosynthesis; L-ectoine from L-aspartate 4-semialdehyde: step 3/3. In terms of biological role, catalyzes the circularization of gamma-N-acetyl-alpha,gamma-diaminobutyric acid (ADABA) to ectoine (1,4,5,6-tetrahydro-2-methyl-4-pyrimidine carboxylic acid), which is an excellent osmoprotectant. This Streptomyces anulatus (Streptomyces chrysomallus) protein is L-ectoine synthase (ectC).